The sequence spans 156 residues: Small ribosomal subunit protein uS7 (156 aa).

This sequence belongs to the universal ribosomal protein uS7 family. Part of the 30S ribosomal subunit. Contacts proteins S9 and S11.

One of the primary rRNA binding proteins, it binds directly to 16S rRNA where it nucleates assembly of the head domain of the 30S subunit. Is located at the subunit interface close to the decoding center, probably blocks exit of the E-site tRNA. The polypeptide is Small ribosomal subunit protein uS7 (Streptococcus sanguinis (strain SK36)).